Here is a 1890-residue protein sequence, read N- to C-terminus: DNA polymerase zeta catalytic subunit (1890 aa).

2 stretches are compositionally biased toward polar residues: residues 508-533 (QENLPDFGSSTKRALPSNPDSQNLRT) and 549-560 (PDSSTSNGASEN). 2 disordered regions span residues 508–565 (QENL…FRRY) and 922–942 (GDSNIDSEKQPLRDNHNDRGA). Over residues 922–940 (GDSNIDSEKQPLRDNHNDR) the composition is skewed to basic and acidic residues. 4 residues coordinate Zn(2+): C1789, C1792, C1803, and C1806. The CysA-type zinc finger occupies 1789 to 1806 (CILCGEVVQESAQLCNRC). Residues C1835, C1838, C1851, and C1856 each contribute to the [4Fe-4S] cluster site. Positions 1835 to 1856 (CRHCGGGDWVVQSGVKCNSLAC) match the CysB motif motif.

This sequence belongs to the DNA polymerase type-B family. Forms DNA polymerase zeta with REV7. The cofactor is [4Fe-4S] cluster. In terms of tissue distribution, expressed in roots, leaves and flowers.

The protein resides in the nucleus. The enzyme catalyses DNA(n) + a 2'-deoxyribonucleoside 5'-triphosphate = DNA(n+1) + diphosphate. Catalytic subunit of the error prone DNA polymerase zeta. Involved in damage-tolerance mechanisms through translesion DNA synthesis. This Arabidopsis thaliana (Mouse-ear cress) protein is DNA polymerase zeta catalytic subunit (REV3).